A 152-amino-acid chain; its full sequence is Superoxide dismutase [Cu-Zn] 1 (152 aa).

Cu cation is bound by residues H45, H47, and H62. The cysteines at positions 56 and 145 are disulfide-linked. Positions 62, 70, 79, and 82 each coordinate Zn(2+). H119 provides a ligand contact to Cu cation.

It belongs to the Cu-Zn superoxide dismutase family. In terms of assembly, homodimer. Interacts with DJ1A and CCS. The cofactor is Cu cation. It depends on Zn(2+) as a cofactor. In terms of tissue distribution, expressed in leaves (at protein level). The spatial localization is regulated by miR398-mediated silencing. Mostly present in flowers, old rosette leaves and inflorescence, and, to a lower extent, in cauline leaves, stems and roots.

Its subcellular location is the cytoplasm. It localises to the cytosol. The protein localises to the nucleus. It carries out the reaction 2 superoxide + 2 H(+) = H2O2 + O2. Its function is as follows. Destroys radicals which are normally produced within the cells and which are toxic to biological systems. The polypeptide is Superoxide dismutase [Cu-Zn] 1 (CSD1) (Arabidopsis thaliana (Mouse-ear cress)).